We begin with the raw amino-acid sequence, 157 residues long: SsrA-binding protein (157 aa).

Positions 132 to 157 (EHDKRDTIKEREGKREVERAMKSRHR) are disordered.

It belongs to the SmpB family.

The protein resides in the cytoplasm. Its function is as follows. Required for rescue of stalled ribosomes mediated by trans-translation. Binds to transfer-messenger RNA (tmRNA), required for stable association of tmRNA with ribosomes. tmRNA and SmpB together mimic tRNA shape, replacing the anticodon stem-loop with SmpB. tmRNA is encoded by the ssrA gene; the 2 termini fold to resemble tRNA(Ala) and it encodes a 'tag peptide', a short internal open reading frame. During trans-translation Ala-aminoacylated tmRNA acts like a tRNA, entering the A-site of stalled ribosomes, displacing the stalled mRNA. The ribosome then switches to translate the ORF on the tmRNA; the nascent peptide is terminated with the 'tag peptide' encoded by the tmRNA and targeted for degradation. The ribosome is freed to recommence translation, which seems to be the essential function of trans-translation. The sequence is that of SsrA-binding protein from Paracidovorax citrulli (strain AAC00-1) (Acidovorax citrulli).